The primary structure comprises 402 residues: Arginine deiminase (402 aa).

Cys-392 functions as the Amidino-cysteine intermediate in the catalytic mechanism.

This sequence belongs to the arginine deiminase family.

Its subcellular location is the cytoplasm. The enzyme catalyses L-arginine + H2O = L-citrulline + NH4(+). It participates in amino-acid degradation; L-arginine degradation via ADI pathway; carbamoyl phosphate from L-arginine: step 1/2. This Mycolicibacterium gilvum (strain PYR-GCK) (Mycobacterium gilvum (strain PYR-GCK)) protein is Arginine deiminase.